The chain runs to 510 residues: Probable cytosol aminopeptidase (510 aa).

Mn(2+) contacts are provided by Lys282 and Asp287. Residue Lys294 is part of the active site. Positions 305, 364, and 366 each coordinate Mn(2+). Arg368 is a catalytic residue.

Belongs to the peptidase M17 family. Requires Mn(2+) as cofactor.

It is found in the cytoplasm. The catalysed reaction is Release of an N-terminal amino acid, Xaa-|-Yaa-, in which Xaa is preferably Leu, but may be other amino acids including Pro although not Arg or Lys, and Yaa may be Pro. Amino acid amides and methyl esters are also readily hydrolyzed, but rates on arylamides are exceedingly low.. The enzyme catalyses Release of an N-terminal amino acid, preferentially leucine, but not glutamic or aspartic acids.. Its function is as follows. Presumably involved in the processing and regular turnover of intracellular proteins. Catalyzes the removal of unsubstituted N-terminal amino acids from various peptides. The protein is Probable cytosol aminopeptidase of Cupriavidus pinatubonensis (strain JMP 134 / LMG 1197) (Cupriavidus necator (strain JMP 134)).